Consider the following 210-residue polypeptide: UPF0301 protein M446_6268 (210 aa).

The protein belongs to the UPF0301 (AlgH) family.

This Methylobacterium sp. (strain 4-46) protein is UPF0301 protein M446_6268.